An 836-amino-acid chain; its full sequence is MEENPLRCTICKNDFEEPILFSCQHTTCRKCSNGSPSCKTCSPGPSTSRSHTPQPDKLAAFLLDASKEEMEQCANCEQITLPMFYCETCQQSLCLACRNVTHQARMFSSHKIISSEERSKVYSSSLCKDHNEPYILYCSDVRKLVCIQCFNGRPLEERHSFISIEQGHRMCLEKIEQSAAKLRFYQSERQEELNVRQRILDEASNFDDAKTSLYQLCQQIIDTVMTTRETLAKELVKQQEQSDEQCKRQIKEIEAVMGPVRLCLFSAQILCTTASKLDVLQLCPQLQKRISVLLDKTVDKLPVSSTPDSIEVRSDLAKSLEPYLGMSAAWCPISVSREGSSSNSYKRGSGSHKALSMLSKFQTTIDLAGAFGQLFGKVEHPLRQLVVELSSISQQVLETQRDLTIRRCIIEKEDVEKLVKMCKKIEASLGMHSAALDGMQSEMQEIWQEQLDRVRRQQIIYREKVEEILNLRETARQILTAAKQMVPYVSCILNMNAMIAPKRCHPPDPAPMESICLEITGIEPNSQNRIMAIEKEEENRRLNQEAKKKEELAGQSAAMKSLKHGKTKRKEMHHRMMLNTNRERSPGGTDSALTSPCIRRLTSTALKEETASELDAEEILDEIFELSGEQYEEVVDGTLTEEDRCSSALLLSLELQNESVSPLPSLEQLLGRISLASRVTSDIGFSRGAMLQSLNDVFALQKPPTPENISVSEERNVLASAVRNAEKRKSGAGLPTTSEKEEMIENDEIIVEKETETEKKKVIRRRVKKAECEQSEEDVTTTFTFGPPPDCPFVPQEIFDKLGESDEKLGTFEAKERVLQSLKQKMNQKNGIDNDN.

The segment at 8–42 (CTICKNDFEEPILFSCQHTTCRKCSNGSPSCKTCS) adopts an RING-type zinc-finger fold. The segment at 68-115 (EEMEQCANCEQITLPMFYCETCQQSLCLACRNVTHQARMFSSHKIISS) adopts a B box-type 1; atypical zinc-finger fold. Zn(2+)-binding residues include C73, C76, C97, and H102. The B box-type 2; degenerate zinc-finger motif lies at 122–164 (YSSSLCKDHNEPYILYCSDVRKLVCIQCFNGRPLEERHSFISI). A coiled-coil region spans residues 527–557 (QNRIMAIEKEEENRRLNQEAKKKEELAGQSA). Over residues 540–552 (RRLNQEAKKKEEL) the composition is skewed to basic and acidic residues. Residues 540-571 (RRLNQEAKKKEELAGQSAAMKSLKHGKTKRKE) are disordered. A compositionally biased stretch (basic residues) spans 561 to 571 (SLKHGKTKRKE).

The chain is Probable RING finger protein 207 homolog from Caenorhabditis briggsae.